Consider the following 425-residue polypeptide: Serine--tRNA ligase (425 aa).

L-serine is bound at residue 231–233 (TAE). ATP is bound at residue 262–264 (RSE). Glutamate 285 serves as a coordination point for L-serine. 349 to 352 (EISS) provides a ligand contact to ATP. Position 385 (serine 385) interacts with L-serine.

Belongs to the class-II aminoacyl-tRNA synthetase family. Type-1 seryl-tRNA synthetase subfamily. Homodimer. The tRNA molecule binds across the dimer.

It localises to the cytoplasm. It carries out the reaction tRNA(Ser) + L-serine + ATP = L-seryl-tRNA(Ser) + AMP + diphosphate + H(+). It catalyses the reaction tRNA(Sec) + L-serine + ATP = L-seryl-tRNA(Sec) + AMP + diphosphate + H(+). It functions in the pathway aminoacyl-tRNA biosynthesis; selenocysteinyl-tRNA(Sec) biosynthesis; L-seryl-tRNA(Sec) from L-serine and tRNA(Sec): step 1/1. Catalyzes the attachment of serine to tRNA(Ser). Is also able to aminoacylate tRNA(Sec) with serine, to form the misacylated tRNA L-seryl-tRNA(Sec), which will be further converted into selenocysteinyl-tRNA(Sec). The protein is Serine--tRNA ligase of Alkaliphilus oremlandii (strain OhILAs) (Clostridium oremlandii (strain OhILAs)).